We begin with the raw amino-acid sequence, 711 residues long: Methionine--tRNA ligase (711 aa).

A 'HIGH' region motif is present at residues 15-25 (PYTNGPIHIGH). Positions 147, 150, 160, and 163 each coordinate Zn(2+). The 'KMSKS' region signature appears at 336-340 (KLSTS). T339 serves as a coordination point for ATP. Residues 610-711 (DFAKMDIRIG…ADAPNGATVN (102 aa)) form the tRNA-binding domain.

This sequence belongs to the class-I aminoacyl-tRNA synthetase family. MetG type 1 subfamily. Homodimer. The cofactor is Zn(2+).

The protein localises to the cytoplasm. The enzyme catalyses tRNA(Met) + L-methionine + ATP = L-methionyl-tRNA(Met) + AMP + diphosphate. In terms of biological role, is required not only for elongation of protein synthesis but also for the initiation of all mRNA translation through initiator tRNA(fMet) aminoacylation. The protein is Methionine--tRNA ligase of Flavobacterium johnsoniae (strain ATCC 17061 / DSM 2064 / JCM 8514 / BCRC 14874 / CCUG 350202 / NBRC 14942 / NCIMB 11054 / UW101) (Cytophaga johnsonae).